Reading from the N-terminus, the 693-residue chain is Glycine--tRNA ligase beta subunit (693 aa).

It belongs to the class-II aminoacyl-tRNA synthetase family. In terms of assembly, tetramer of two alpha and two beta subunits.

It localises to the cytoplasm. It catalyses the reaction tRNA(Gly) + glycine + ATP = glycyl-tRNA(Gly) + AMP + diphosphate. This chain is Glycine--tRNA ligase beta subunit, found in Vibrio vulnificus (strain CMCP6).